Here is a 306-residue protein sequence, read N- to C-terminus: Glutaminase (306 aa).

The substrate site is built by Ser-66, Asn-116, Glu-159, Asn-166, Tyr-190, Tyr-242, and Val-260.

The protein belongs to the glutaminase family. As to quaternary structure, homotetramer.

It catalyses the reaction L-glutamine + H2O = L-glutamate + NH4(+). In Caulobacter vibrioides (strain ATCC 19089 / CIP 103742 / CB 15) (Caulobacter crescentus), this protein is Glutaminase.